The chain runs to 150 residues: Detocs response regulatory protein DtcB (150 aa).

The 149-residue stretch at 2 to 150 (KILIADDNIQ…TDLIKKITEL (149 aa)) folds into the Response regulatory domain. The residue at position 54 (aspartate 54) is a 4-aspartylphosphate.

Post-translationally, probably phosphorylated by DtcA.

Its function is as follows. Possible phosphate scavenger member of the two-component regulatory system Detocs that confers resistance to bacteriophage. When the system (DtcA-DtcB-DtcC) is expressed in a susceptible E.coli (strain MG1655) it confers resistance to bacteriophages T2, T4, T5, T7, SECphi4, SECphi6 and SECphi27; the level of resistance varies, resistance to T2, T7 and SECphi4 is not very high. DtcA probably autophosphorylates upon sensing viral infection, and subsequently transfers the phosphate signal to DtcC which activates it, leading to an antiviral defense; DtcB (this subunit) may scavenge phosphorylation signals from accidental activation of DtcA. This Enterobacter cloacae (strain JD6301) protein is Detocs response regulatory protein DtcB.